The primary structure comprises 305 residues: GTP cyclohydrolase FolE2 (305 aa).

The protein belongs to the GTP cyclohydrolase IV family.

The catalysed reaction is GTP + H2O = 7,8-dihydroneopterin 3'-triphosphate + formate + H(+). It functions in the pathway cofactor biosynthesis; 7,8-dihydroneopterin triphosphate biosynthesis; 7,8-dihydroneopterin triphosphate from GTP: step 1/1. In terms of biological role, converts GTP to 7,8-dihydroneopterin triphosphate. This is GTP cyclohydrolase FolE2 from Xanthomonas euvesicatoria pv. vesicatoria (strain 85-10) (Xanthomonas campestris pv. vesicatoria).